A 424-amino-acid polypeptide reads, in one-letter code: Serine--tRNA ligase (424 aa).

232 to 234 lines the L-serine pocket; it reads TAE. 263–265 serves as a coordination point for ATP; it reads RRE. Glu-286 lines the L-serine pocket. Residue 350-353 participates in ATP binding; that stretch reads EISS. Ser-384 is an L-serine binding site.

This sequence belongs to the class-II aminoacyl-tRNA synthetase family. Type-1 seryl-tRNA synthetase subfamily. Homodimer. The tRNA molecule binds across the dimer.

It is found in the cytoplasm. It catalyses the reaction tRNA(Ser) + L-serine + ATP = L-seryl-tRNA(Ser) + AMP + diphosphate + H(+). The enzyme catalyses tRNA(Sec) + L-serine + ATP = L-seryl-tRNA(Sec) + AMP + diphosphate + H(+). The protein operates within aminoacyl-tRNA biosynthesis; selenocysteinyl-tRNA(Sec) biosynthesis; L-seryl-tRNA(Sec) from L-serine and tRNA(Sec): step 1/1. Functionally, catalyzes the attachment of serine to tRNA(Ser). Is also able to aminoacylate tRNA(Sec) with serine, to form the misacylated tRNA L-seryl-tRNA(Sec), which will be further converted into selenocysteinyl-tRNA(Sec). The sequence is that of Serine--tRNA ligase from Prochlorococcus marinus subsp. pastoris (strain CCMP1986 / NIES-2087 / MED4).